The following is a 2205-amino-acid chain: Genome polyprotein (2205 aa).

A lipid anchor (N-myristoyl glycine; by host) is attached at Gly-2. Residues 2-1518 lie on the Cytoplasmic side of the membrane; that stretch reads GAQVSSQKVG…NINRAMTILQ (1517 aa). Residues 579-599 form an amphipathic alpha-helix region; the sequence is GLGDLIEGVVEGVTRNALTPL. Polar residues predominate over residues 598 to 613; it reads PLTPVNNLPDTRSSGP. Residues 598–619 are disordered; it reads PLTPVNNLPDTRSSGPAHSKET. Catalysis depends on for protease 2A activity residues His-899 and Asp-917. Zn(2+) is bound by residues Cys-934 and Cys-936. The active-site For protease 2A activity is the Cys-988. 2 residues coordinate Zn(2+): Cys-994 and His-996. The tract at residues 1126-1198 is membrane-binding; sequence GDSWLKKFTE…HQSCPSQEHQ (73 aa). The segment at 1126 to 1264 is oligomerization; sequence GDSWLKKFTE…SPGTGKSVAT (139 aa). Residues 1147–1151 form an RNA-binding region; sequence SNKIS. Positions 1230–1386 constitute an SF3 helicase domain; the sequence is EHTINNYVQF…SEYSRDGKLN (157 aa). 1254 to 1261 provides a ligand contact to ATP; that stretch reads GSPGTGKS. Residues Cys-1394, Cys-1397, Cys-1406, and Cys-1411 each coordinate Zn(2+). The segment at 1394–1411 adopts a C4-type zinc-finger fold; the sequence is CKNCHQPANFKRCCPLVC. Positions 1438 to 1445 are RNA-binding; the sequence is ERNRRSSI. Residues 1449–1454 are oligomerization; sequence MEALFQ. Residues 1519-1534 lie within the membrane without spanning it; it reads AVTTFAAVAGVVYVMY. At 1535–2205 the chain is on the cytoplasmic side; the sequence is KLFAGHQGAY…TLYRRWLDSF (671 aa). Tyr-1544 carries the O-(5'-phospho-RNA)-tyrosine modification. The 179-residue stretch at 1564 to 1742 folds into the Peptidase C3 domain; sequence GPGFDYAVAM…FAAALKRSYF (179 aa). Catalysis depends on for protease 3C activity residues His-1603, Glu-1634, and Cys-1710. In terms of domain architecture, RdRp catalytic spans 1971 to 2086; the sequence is MEEKLFDYTG…SYPHEVDASL (116 aa). Mg(2+) is bound by residues Asp-1977 and Asp-2072.

Belongs to the picornaviruses polyprotein family. In terms of assembly, interacts with capsid protein VP1 and capsid protein VP3 to form heterotrimeric protomers. Interacts with capsid protein VP0, and capsid protein VP3 to form heterotrimeric protomers. Interacts with human PVR. Five protomers subsequently associate to form pentamers which serve as building blocks for the capsid. Interacts with capsid protein VP2, capsid protein VP3 and capsid protein VP4 following cleavage of capsid protein VP0. As to quaternary structure, interacts with capsid protein VP1 and capsid protein VP3 in the mature capsid. In terms of assembly, interacts with capsid protein VP0 and capsid protein VP1 to form heterotrimeric protomers. Five protomers subsequently associate to form pentamers which serve as building blocks for the capsid. Interacts with capsid protein VP4 in the mature capsid. Interacts with protein 2C; this interaction may be important for virion morphogenesis. Interacts with capsid protein VP1 and capsid protein VP3. As to quaternary structure, homodimer. In terms of assembly, homohexamer; forms a hexameric ring structure with 6-fold symmetry characteristic of AAA+ ATPases. Interacts (via N-terminus) with host RTN3 (via reticulon domain); this interaction is important for viral replication. Interacts with capsid protein VP3; this interaction may be important for virion morphogenesis. Interacts with protein 3CD. As to quaternary structure, homodimer. Interacts with host GBF1. Interacts (via GOLD domain) with host ACBD3 (via GOLD domain); this interaction allows the formation of a viral protein 3A/ACBD3 heterotetramer with a 2:2 stoichiometry, which will stimulate the recruitment of host PI4KB in order to synthesize PI4P at the viral RNA replication sites. In terms of assembly, interacts with RNA-directed RNA polymerase. Interacts with protein 3AB and with RNA-directed RNA polymerase. As to quaternary structure, interacts with Viral protein genome-linked and with protein 3CD. The cofactor is Mg(2+). Specific enzymatic cleavages in vivo by the viral proteases yield processing intermediates and the mature proteins. In terms of processing, myristoylation is required for the formation of pentamers during virus assembly. Further assembly of 12 pentamers and a molecule of genomic RNA generates the provirion. Post-translationally, during virion maturation, immature virions are rendered infectious following cleavage of VP0 into VP4 and VP2. This maturation seems to be an autocatalytic event triggered by the presence of RNA in the capsid and it is followed by a conformational change infectious virion. Myristoylation is required during RNA encapsidation and formation of the mature virus particle. In terms of processing, VPg is uridylylated by the polymerase into VPg-pUpU. This acts as a nucleotide-peptide primer for the genomic RNA replication.

It localises to the virion. The protein resides in the host cytoplasm. It is found in the host cytoplasmic vesicle membrane. The protein localises to the host nucleus. It catalyses the reaction a ribonucleoside 5'-triphosphate + H2O = a ribonucleoside 5'-diphosphate + phosphate + H(+). The enzyme catalyses Selective cleavage of Tyr-|-Gly bond in the picornavirus polyprotein.. The catalysed reaction is RNA(n) + a ribonucleoside 5'-triphosphate = RNA(n+1) + diphosphate. It carries out the reaction Selective cleavage of Gln-|-Gly bond in the poliovirus polyprotein. In other picornavirus reactions Glu may be substituted for Gln, and Ser or Thr for Gly.. Its activity is regulated as follows. Replication or transcription is subject to high level of random mutations by the nucleotide analog ribavirin. Forms an icosahedral capsid of pseudo T=3 symmetry with capsid proteins VP2 and VP3. The capsid is 300 Angstroms in diameter, composed of 60 copies of each capsid protein and enclosing the viral positive strand RNA genome. Capsid protein VP1 mainly forms the vertices of the capsid. Capsid protein VP1 interacts with host cell receptor PVR to provide virion attachment to target host cells. This attachment induces virion internalization predominantly through clathrin- and caveolin-independent endocytosis in Hela cells and through caveolin-mediated endocytosis in brain microvascular endothelial cells. Tyrosine kinases are probably involved in the entry process. Virus binding to PVR induces increased junctional permeability and rearrangement of junctional proteins. Modulation of endothelial tight junctions, as well as cytolytic infection of endothelial cells themselves, may result in loss of endothelial integrity which may help the virus to reach the CNS. After binding to its receptor, the capsid undergoes conformational changes. Capsid protein VP1 N-terminus (that contains an amphipathic alpha-helix) and capsid protein VP4 are externalized. Together, they shape a pore in the host membrane through which viral genome is translocated to host cell cytoplasm. Its function is as follows. Forms an icosahedral capsid of pseudo T=3 symmetry with capsid proteins VP2 and VP3. The capsid is 300 Angstroms in diameter, composed of 60 copies of each capsid protein and enclosing the viral positive strand RNA genome. In terms of biological role, lies on the inner surface of the capsid shell. After binding to the host receptor, the capsid undergoes conformational changes. Capsid protein VP4 is released, Capsid protein VP1 N-terminus is externalized, and together, they shape a pore in the host membrane through which the viral genome is translocated into the host cell cytoplasm. Functionally, component of immature procapsids, which is cleaved into capsid proteins VP4 and VP2 after maturation. Allows the capsid to remain inactive before the maturation step. Cysteine protease that cleaves viral polyprotein and specific host proteins. It is responsible for the autocatalytic cleavage between the P1 and P2 regions, which is the first cleavage occurring in the polyprotein. Also cleaves the host translation initiation factor EIF4G1, in order to shut down the capped cellular mRNA translation. Inhibits the host nucleus-cytoplasm protein and RNA trafficking by cleaving host members of the nuclear pores including NUP98, NUP62 and NUP153. Counteracts stress granule formation probably by antagonizing its assembly or promoting its dissassembly. Cleaves and inhibits host IFIH1/MDA5, thereby inhibiting the type-I IFN production and the establishment of the antiviral state. Cleaves and inhibits host MAVS, thereby inhibiting the type-I IFN production and the establishment of the antiviral state. Its function is as follows. Plays an essential role in the virus replication cycle by acting as a viroporin. Creates a pore in the host endoplasmic reticulum and as a consequence releases Ca2+ in the cytoplasm of infected cell. In turn, high levels of cytoplasmic calcium may trigger membrane trafficking and transport of viral ER-associated proteins to viroplasms, sites of viral genome replication. In terms of biological role, induces and associates with structural rearrangements of intracellular membranes. Displays RNA-binding, nucleotide binding and NTPase activities. May play a role in virion morphogenesis and viral RNA encapsidation by interacting with the capsid protein VP3. Functionally, localizes the viral replication complex to the surface of membranous vesicles. Together with protein 3CD binds the Cis-Active RNA Element (CRE) which is involved in RNA synthesis initiation. Acts as a cofactor to stimulate the activity of 3D polymerase, maybe through a nucleid acid chaperone activity. Localizes the viral replication complex to the surface of membranous vesicles. It inhibits host cell endoplasmic reticulum-to-Golgi apparatus transport and causes the disassembly of the Golgi complex, possibly through GBF1 interaction. This would result in depletion of MHC, trail receptors and IFN receptors at the host cell surface. Plays an essential role in viral RNA replication by recruiting ACBD3 and PI4KB at the viral replication sites, thereby allowing the formation of the rearranged membranous structures where viral replication takes place. Its function is as follows. Acts as a primer for viral RNA replication and remains covalently bound to viral genomic RNA. VPg is uridylylated prior to priming replication into VPg-pUpU. The oriI viral genomic sequence may act as a template for this. The VPg-pUpU is then used as primer on the genomic RNA poly(A) by the RNA-dependent RNA polymerase to replicate the viral genome. During genome replication, the VPg-RNA linkage is removed by the host TDP2, thereby accelerating replication. During the late stage of the replication cycle, host TDP2 is excluded from sites of viral RNA synthesis and encapsidation, allowing for the generation of progeny virions. In terms of biological role, involved in the viral replication complex and viral polypeptide maturation. It exhibits protease activity with a specificity and catalytic efficiency that is different from protease 3C. Protein 3CD lacks polymerase activity. Protein 3CD binds to the 5'UTR of the viral genome. Functionally, major viral protease that mediates proteolytic processing of the polyprotein. Cleaves host EIF5B, contributing to host translation shutoff. Also cleaves host PABPC1, contributing to host translation shutoff. Cleaves host RIGI and thus contributes to the inhibition of type I interferon production. Cleaves host NLRP1, triggers host N-glycine-mediated degradation of the autoinhibitory NLRP1 N-terminal fragment. Inhibits the integrated stress response (ISR) in the infected cell by cleaving host G3BP1. Stress granule formation is thus inhibited, which allows protein synthesis and viral replication. Replicates the viral genomic RNA on the surface of intracellular membranes. May form linear arrays of subunits that propagate along a strong head-to-tail interaction called interface-I. Covalently attaches UMP to a tyrosine of VPg, which is used to prime RNA synthesis. The positive stranded RNA genome is first replicated at virus induced membranous vesicles, creating a dsRNA genomic replication form. This dsRNA is then used as template to synthesize positive stranded RNA genomes. ss(+)RNA genomes are either translated, replicated or encapsidated. The chain is Genome polyprotein from Homo sapiens (Human).